A 109-amino-acid chain; its full sequence is Small ribosomal subunit protein uS17 (109 aa).

It belongs to the universal ribosomal protein uS17 family. In terms of assembly, part of the 30S ribosomal subunit.

Functionally, one of the primary rRNA binding proteins, it binds specifically to the 5'-end of 16S ribosomal RNA. The chain is Small ribosomal subunit protein uS17 from Methanococcoides burtonii (strain DSM 6242 / NBRC 107633 / OCM 468 / ACE-M).